Here is a 169-residue protein sequence, read N- to C-terminus: T-cell receptor gamma chain C region DFL12 (169 aa).

Residues proline 1–tyrosine 136 form a c region region. Residues threonine 137–leucine 157 traverse the membrane as a helical segment. The Cytoplasmic segment spans residues arginine 158–serine 169.

It is found in the membrane. This chain is T-cell receptor gamma chain C region DFL12, found in Mus musculus (Mouse).